The sequence spans 399 residues: Stearoyl-[acyl-carrier-protein] 9-desaturase, chloroplastic (399 aa).

Over residues 1–12 (MALNLNPVSTPF) the composition is skewed to polar residues. The N-terminal 35 residues, 1-35 (MALNLNPVSTPFQCRRLPSFSPRQTPSRRSPKFFM), are a transit peptide targeting the chloroplast. The segment at 1 to 57 (MALNLNPVSTPFQCRRLPSFSPRQTPSRRSPKFFMASTLSSSSPKEAESLKKPFSPP) is disordered. Fe cation contacts are provided by Glu141, Glu179, His182, Glu232, Glu265, and His268.

This sequence belongs to the fatty acid desaturase type 2 family. Homodimer. Fe(2+) serves as cofactor.

It localises to the plastid. The protein localises to the chloroplast. It carries out the reaction octadecanoyl-[ACP] + 2 reduced [2Fe-2S]-[ferredoxin] + O2 + 2 H(+) = (9Z)-octadecenoyl-[ACP] + 2 oxidized [2Fe-2S]-[ferredoxin] + 2 H2O. It functions in the pathway lipid metabolism; fatty acid metabolism. In terms of biological role, converts stearoyl-ACP to oleoyl-ACP by introduction of a cis double bond between carbons 9 and 10 of the acyl chain. In Spinacia oleracea (Spinach), this protein is Stearoyl-[acyl-carrier-protein] 9-desaturase, chloroplastic.